Here is an 810-residue protein sequence, read N- to C-terminus: DNA gyrase subunit A (810 aa).

Positions 36-502 constitute a Topo IIA-type catalytic domain; it reads LPDVRDGLKP…EVLKTSMSDL (467 aa). The active-site O-(5'-phospho-DNA)-tyrosine intermediate is Tyr-124. The short motif at 529 to 535 is the GyrA-box element; the sequence is QGIGGKG.

Belongs to the type II topoisomerase GyrA/ParC subunit family. In terms of assembly, heterotetramer, composed of two GyrA and two GyrB chains. In the heterotetramer, GyrA contains the active site tyrosine that forms a transient covalent intermediate with DNA, while GyrB binds cofactors and catalyzes ATP hydrolysis.

The protein resides in the cytoplasm. It carries out the reaction ATP-dependent breakage, passage and rejoining of double-stranded DNA.. Its function is as follows. A type II topoisomerase that negatively supercoils closed circular double-stranded (ds) DNA in an ATP-dependent manner to modulate DNA topology and maintain chromosomes in an underwound state. Negative supercoiling favors strand separation, and DNA replication, transcription, recombination and repair, all of which involve strand separation. Also able to catalyze the interconversion of other topological isomers of dsDNA rings, including catenanes and knotted rings. Type II topoisomerases break and join 2 DNA strands simultaneously in an ATP-dependent manner. This Borrelia hermsii (strain HS1 / DAH) protein is DNA gyrase subunit A.